Here is a 128-residue protein sequence, read N- to C-terminus: Sulfurtransferase TusD (128 aa).

Residue cysteine 78 is the Cysteine persulfide intermediate of the active site.

The protein belongs to the DsrE/TusD family. Heterohexamer, formed by a dimer of trimers. The hexameric TusBCD complex contains 2 copies each of TusB, TusC and TusD. The TusBCD complex interacts with TusE.

The protein localises to the cytoplasm. Part of a sulfur-relay system required for 2-thiolation of 5-methylaminomethyl-2-thiouridine (mnm(5)s(2)U) at tRNA wobble positions. Accepts sulfur from TusA and transfers it in turn to TusE. In Erwinia tasmaniensis (strain DSM 17950 / CFBP 7177 / CIP 109463 / NCPPB 4357 / Et1/99), this protein is Sulfurtransferase TusD.